Consider the following 353-residue polypeptide: MTAILERRDSENLWGRFCNWITSTENRLYIGWFGVLMIPTLLTATSVFIIAFIAAPPVDIDGIREPVSGSLLYGNNIISGAIIPTSAAIGLHFYPIWEAASVDEWLYNGGPYELIVLHFLLGVACYMGREWELSFRLGMRPWIAVAYSAPVAAATAVFLIYPIGQGSFSDGMPLGISGTFNFMIVFQAEHNILMHPFHMLGVAGVFGGSLFSAMHGSLVTSSLIRETTENESANEGYRFGQEEETYNIVAAHGYFGRLIFQYASFNNSRSLHFFLAAWPVVGIWFTALGISTMAFNLNGFNFNQSVVDSQGRVINTWADIINRANLGMEVMHERNAHNFPLDLAAVEAPSING.

Thr2 bears the N-acetylthreonine mark. Thr2 is subject to Phosphothreonine. The next 3 helical transmembrane spans lie at 29 to 46 (YIGW…TATS), 118 to 133 (HFLL…EWEL), and 142 to 156 (WIAV…AATA). His118 contributes to the chlorophyll a binding site. Tyr126 provides a ligand contact to pheophytin a. The [CaMn4O5] cluster site is built by Asp170 and Glu189. A helical membrane pass occupies residues 197–218 (FHMLGVAGVFGGSLFSAMHGSL). His198 provides a ligand contact to chlorophyll a. A quinone contacts are provided by residues His215 and 264-265 (SF). A Fe cation-binding site is contributed by His215. His272 is a binding site for Fe cation. Residues 274 to 288 (FLAAWPVVGIWFTAL) form a helical membrane-spanning segment. The [CaMn4O5] cluster site is built by His332, Glu333, Asp342, and Ala344. Positions 345-353 (AVEAPSING) are excised as a propeptide.

It belongs to the reaction center PufL/M/PsbA/D family. As to quaternary structure, PSII is composed of 1 copy each of membrane proteins PsbA, PsbB, PsbC, PsbD, PsbE, PsbF, PsbH, PsbI, PsbJ, PsbK, PsbL, PsbM, PsbT, PsbX, PsbY, PsbZ, Psb30/Ycf12, at least 3 peripheral proteins of the oxygen-evolving complex and a large number of cofactors. It forms dimeric complexes. The D1/D2 heterodimer binds P680, chlorophylls that are the primary electron donor of PSII, and subsequent electron acceptors. It shares a non-heme iron and each subunit binds pheophytin, quinone, additional chlorophylls, carotenoids and lipids. D1 provides most of the ligands for the Mn4-Ca-O5 cluster of the oxygen-evolving complex (OEC). There is also a Cl(-1) ion associated with D1 and D2, which is required for oxygen evolution. The PSII complex binds additional chlorophylls, carotenoids and specific lipids. is required as a cofactor. Tyr-161 forms a radical intermediate that is referred to as redox-active TyrZ, YZ or Y-Z. Post-translationally, C-terminally processed by CTPA; processing is essential to allow assembly of the oxygen-evolving complex and thus photosynthetic growth.

Its subcellular location is the plastid. It is found in the chloroplast thylakoid membrane. The catalysed reaction is 2 a plastoquinone + 4 hnu + 2 H2O = 2 a plastoquinol + O2. Functionally, this is one of the two reaction center proteins of photosystem II. In terms of biological role, photosystem II (PSII) is a light-driven water:plastoquinone oxidoreductase that uses light energy to abstract electrons from H(2)O, generating O(2) and a proton gradient subsequently used for ATP formation. It consists of a core antenna complex that captures photons, and an electron transfer chain that converts photonic excitation into a charge separation. The D1/D2 (PsbA/PsbD) reaction center heterodimer binds P680, the primary electron donor of PSII as well as several subsequent electron acceptors. In Pisum sativum (Garden pea), this protein is Photosystem II protein D1.